A 404-amino-acid chain; its full sequence is Propionate kinase (404 aa).

This sequence belongs to the acetokinase family. PduW subfamily.

The protein resides in the cytoplasm. It carries out the reaction propanoate + ATP = propanoyl phosphate + ADP. It participates in polyol metabolism; 1,2-propanediol degradation. Functionally, works with phosphate acetyltransferase (pta) to capture exogenous propionate and regenerate propionyl-CoA during degradation of 1,2-propanediol (1,2-PD). The sequence is that of Propionate kinase from Escherichia fergusonii (strain ATCC 35469 / DSM 13698 / CCUG 18766 / IAM 14443 / JCM 21226 / LMG 7866 / NBRC 102419 / NCTC 12128 / CDC 0568-73).